We begin with the raw amino-acid sequence, 100 residues long: Co-chaperonin GroES (100 aa).

It belongs to the GroES chaperonin family. Heptamer of 7 subunits arranged in a ring. Interacts with the chaperonin GroEL.

Its subcellular location is the cytoplasm. Functionally, together with the chaperonin GroEL, plays an essential role in assisting protein folding. The GroEL-GroES system forms a nano-cage that allows encapsulation of the non-native substrate proteins and provides a physical environment optimized to promote and accelerate protein folding. GroES binds to the apical surface of the GroEL ring, thereby capping the opening of the GroEL channel. The chain is Co-chaperonin GroES from Mycobacterium marinum (strain ATCC BAA-535 / M).